Consider the following 914-residue polypeptide: TRPM8 channel-associated factor 3 (914 aa).

In terms of domain architecture, Peptidase M60 spans 533–832 (NSWVSTGLYL…TYLQLQEGFG (300 aa)).

Belongs to the TCAF family.

In terms of biological role, may play a role in the regulation of the cation channel TRPM8 activity. This chain is TRPM8 channel-associated factor 3, found in Rattus norvegicus (Rat).